A 279-amino-acid chain; its full sequence is Thymidylate synthase (279 aa).

Position 133 to 134 (133 to 134 (RR)) interacts with dUMP. The active-site Nucleophile is cysteine 154. DUMP-binding positions include 178–181 (RSND), asparagine 189, and 219–221 (HIY). (6R)-5,10-methylene-5,6,7,8-tetrahydrofolate is bound at residue aspartate 181. Residue alanine 278 participates in (6R)-5,10-methylene-5,6,7,8-tetrahydrofolate binding.

Belongs to the thymidylate synthase family. Bacterial-type ThyA subfamily. As to quaternary structure, homodimer.

The protein localises to the cytoplasm. The enzyme catalyses dUMP + (6R)-5,10-methylene-5,6,7,8-tetrahydrofolate = 7,8-dihydrofolate + dTMP. The protein operates within pyrimidine metabolism; dTTP biosynthesis. Functionally, catalyzes the reductive methylation of 2'-deoxyuridine-5'-monophosphate (dUMP) to 2'-deoxythymidine-5'-monophosphate (dTMP) while utilizing 5,10-methylenetetrahydrofolate (mTHF) as the methyl donor and reductant in the reaction, yielding dihydrofolate (DHF) as a by-product. This enzymatic reaction provides an intracellular de novo source of dTMP, an essential precursor for DNA biosynthesis. In Streptococcus pneumoniae (strain 70585), this protein is Thymidylate synthase.